The following is a 231-amino-acid chain: Ribosome maturation factor RimM (231 aa).

Residues 1-29 (MSERDSGSSGRAKAKRQPGAKAPFGPFVR) are disordered. One can recognise a PRC barrel domain in the interval 150–231 (TDEYYWVDLV…KIIVDWEADY (82 aa)).

Belongs to the RimM family. Binds ribosomal protein uS19.

It localises to the cytoplasm. Its function is as follows. An accessory protein needed during the final step in the assembly of 30S ribosomal subunit, possibly for assembly of the head region. Essential for efficient processing of 16S rRNA. May be needed both before and after RbfA during the maturation of 16S rRNA. It has affinity for free ribosomal 30S subunits but not for 70S ribosomes. The polypeptide is Ribosome maturation factor RimM (Paraburkholderia phymatum (strain DSM 17167 / CIP 108236 / LMG 21445 / STM815) (Burkholderia phymatum)).